Reading from the N-terminus, the 155-residue chain is Large ribosomal subunit protein uL13 (155 aa).

It belongs to the universal ribosomal protein uL13 family. Part of the 50S ribosomal subunit.

In terms of biological role, this protein is one of the early assembly proteins of the 50S ribosomal subunit, although it is not seen to bind rRNA by itself. It is important during the early stages of 50S assembly. The polypeptide is Large ribosomal subunit protein uL13 (Rickettsia rickettsii (strain Iowa)).